The following is an 870-amino-acid chain: MTEQRTKYADSILTTKSPYEATETIRIRLSQVKLLNKDFYLLFKELANLKRNYAQQLRKIIAENEDITKILNAQMIESNVLTPQEMSAFRFNSLGELRNVWDTVIEELKSDLKSSTEYYNTLDQQVVRELKESVENNTSWRESKDLHSKLSKNAASIEHYSKNNENSSHLEEARRQWDQQSPYLFELFETIDYNRLDTLKNCMLRFQTSFSDYLLNTTKECETVMTKFLAFEPQSEIDRFAKDASQYNFQLSSSSKEVVPNNASPASATGARPVSVSNGAANTEREKKSPQKDKRKSAFGNIGHRLASASSSLTHNDLMNNEFSDSTNNSSLKSKKSSHTLRSKVGSIFGRNKTKNKRQQQSSSNSHIQASITETPNNSSTRVSSTATSSIYQKQRRPTYSSSKSNNWTPGEASDTPPLPPHATPKNVDAPVTADTPPAQTFTPSEVPPSTPQQSSPPTAKEPDSSNLPKTVPISISQPPLQPQSKTKPLPVEPASPSISLPTATVDNQPSGQVDSRPLHIRAPALPPSRKQNFIHNRDSQLYDSLPNHGSGATPTSSSLSSIPQERPVSTLSSQITGELRELNPQATGSSTSLVGQSLFQHSSLDTSQFGLNASIAEVLNASFKDGMLQNSQLIGEIALNYLPNSVMNSPLPIGINLRINNGAKFEKVILNQAFIERVAPEEFKVNPSFIDSRTLGAIKYSIKEPIAPIVIHPVWRFESHQASVVLTVKMSPSLPDEISQIVIEDLVVFVNIDGANATSALSKPQGSFSKEKKRITWRFKEPVVLTRNGEGQRLIARFITDGLAHESAKGVITKFTISETDNVALPHSGAGSGITLTCQELDENNPFGGEWLDVNTKRTLTTGNYHGLA.

Positions 252-267 (SSSSKEVVPNNASPAS) are enriched in polar residues. Disordered regions lie at residues 252–298 (SSSS…RKSA) and 310–574 (SSSL…TLSS). Lysine 256 participates in a covalent cross-link: Glycyl lysine isopeptide (Lys-Gly) (interchain with G-Cter in ubiquitin). Serine 264 carries the post-translational modification Phosphoserine. Over residues 283 to 292 (TEREKKSPQK) the composition is skewed to basic and acidic residues. The segment covering 310–323 (SSSLTHNDLMNNEF) has biased composition (polar residues). Serine 331 is subject to Phosphoserine. Basic residues predominate over residues 333-342 (KSKKSSHTLR). Polar residues predominate over residues 367 to 378 (HIQASITETPNN). The span at 379–390 (SSTRVSSTATSS) shows a compositional bias: low complexity. Over residues 398–409 (PTYSSSKSNNWT) the composition is skewed to polar residues. Threonine 416 bears the Phosphothreonine mark. Residues 473-485 (PISISQPPLQPQS) show a composition bias toward low complexity. A phosphoserine mark is found at serine 496 and serine 500. The span at 497 to 514 (PSISLPTATVDNQPSGQV) shows a compositional bias: polar residues. Position 577 is a phosphothreonine (threonine 577). The region spanning 609–869 (QFGLNASIAE…TLTTGNYHGL (261 aa)) is the MHD domain.

The protein belongs to the SYP1 family. As to quaternary structure, interacts with CDC3, CDC10, CDC11, CDC12, EDE1 and EPS15.

The protein localises to the bud neck. Functionally, multi-functional protein that contributes to the endocytic process, but also to events that occur at the neck during budding and/or cytokinesis. Plays a role as an endocytic adapters with membrane-tubulation activity that associates with transmembrane cargo proteins and initiates the formation of endocytic sites. Contributes to the stabilization of the nascent clathrin-coated pit. Also plays a role in late endocytosis by mediating vesiculation. Involved in the regulation of cell cycle-dependent dynamics of the septin cytoskeleton by promoting septin turnover in different cell cycle stages. May act through the RHO2 signaling pathway to repolarize cortical actin patches in profilin-deficient cells. In Saccharomyces cerevisiae (strain ATCC 204508 / S288c) (Baker's yeast), this protein is Suppressor of yeast profilin deletion (SYP1).